The sequence spans 156 residues: ATP synthase subunit b (156 aa).

A helical membrane pass occupies residues Ala11–Ala31.

Belongs to the ATPase B chain family. As to quaternary structure, F-type ATPases have 2 components, F(1) - the catalytic core - and F(0) - the membrane proton channel. F(1) has five subunits: alpha(3), beta(3), gamma(1), delta(1), epsilon(1). F(0) has three main subunits: a(1), b(2) and c(10-14). The alpha and beta chains form an alternating ring which encloses part of the gamma chain. F(1) is attached to F(0) by a central stalk formed by the gamma and epsilon chains, while a peripheral stalk is formed by the delta and b chains.

It localises to the cell inner membrane. Its function is as follows. F(1)F(0) ATP synthase produces ATP from ADP in the presence of a proton or sodium gradient. F-type ATPases consist of two structural domains, F(1) containing the extramembraneous catalytic core and F(0) containing the membrane proton channel, linked together by a central stalk and a peripheral stalk. During catalysis, ATP synthesis in the catalytic domain of F(1) is coupled via a rotary mechanism of the central stalk subunits to proton translocation. In terms of biological role, component of the F(0) channel, it forms part of the peripheral stalk, linking F(1) to F(0). This is ATP synthase subunit b from Salmonella gallinarum (strain 287/91 / NCTC 13346).